Consider the following 307-residue polypeptide: Homoserine kinase (307 aa).

95–105 (PQSRGLGSSAS) is an ATP binding site.

The protein belongs to the GHMP kinase family. Homoserine kinase subfamily.

The protein localises to the cytoplasm. The catalysed reaction is L-homoserine + ATP = O-phospho-L-homoserine + ADP + H(+). Its pathway is amino-acid biosynthesis; L-threonine biosynthesis; L-threonine from L-aspartate: step 4/5. Its function is as follows. Catalyzes the ATP-dependent phosphorylation of L-homoserine to L-homoserine phosphate. The chain is Homoserine kinase from Corynebacterium aurimucosum (strain ATCC 700975 / DSM 44827 / CIP 107346 / CN-1) (Corynebacterium nigricans).